Here is a 545-residue protein sequence, read N- to C-terminus: uncharacterized protein (545 aa).

2 disordered regions span residues M1–E162 and Y200–P250. Polar residues predominate over residues N86 to S100. 2 stretches are compositionally biased toward low complexity: residues T109–K128 and S141–T152. 2 stretches are compositionally biased toward polar residues: residues S212 to T221 and I228 to S244. Positions R458 to G540 constitute a PDZ domain.

This is an uncharacterized protein from Caenorhabditis elegans.